Here is a 505-residue protein sequence, read N- to C-terminus: Sucrose porin (505 aa).

A signal peptide spans 1 to 22 (MYRKSTLAMLIALLTSAASAHA). The disordered stretch occupies residues 44 to 87 (ENRAQTAENRAGAAEKKVQQLTAQQQKNQNSTQEVAQRTARLEK). A compositionally biased stretch (low complexity) spans 62–72 (QQLTAQQQKNQ).

The protein belongs to the porin LamB (TC 1.B.3) family. In terms of assembly, homotrimer.

The protein resides in the cell outer membrane. Porin for sucrose uptake. This chain is Sucrose porin (scrY), found in Salmonella typhimurium.